The primary structure comprises 703 residues: Polyribonucleotide nucleotidyltransferase (703 aa).

Mg(2+)-binding residues include Asp487 and Asp493. The KH domain maps to Pro554 to Ile613. The region spanning Gly623–Lys691 is the S1 motif domain.

This sequence belongs to the polyribonucleotide nucleotidyltransferase family. Component of the RNA degradosome, which is a multiprotein complex involved in RNA processing and mRNA degradation. Mg(2+) serves as cofactor.

The protein localises to the cytoplasm. It carries out the reaction RNA(n+1) + phosphate = RNA(n) + a ribonucleoside 5'-diphosphate. In terms of biological role, involved in mRNA degradation. Catalyzes the phosphorolysis of single-stranded polyribonucleotides processively in the 3'- to 5'-direction. The sequence is that of Polyribonucleotide nucleotidyltransferase from Hahella chejuensis (strain KCTC 2396).